Reading from the N-terminus, the 353-residue chain is (-)-beta-caryophyllene synthase ((2E,6E)-farnesyl diphosphate cyclizing) (353 aa).

Mg(2+) contacts are provided by D85 and D89. Positions 85–89 match the DDXXD motif motif; that stretch reads DDQFD. Substrate is bound at residue R179. Positions 225 and 229 each coordinate Mg(2+). K232 contributes to the substrate binding site. E233 contacts Mg(2+). 320–321 contributes to the substrate binding site; the sequence is RF.

This sequence belongs to the terpene synthase family. It depends on Mg(2+) as a cofactor.

The enzyme catalyses (2E,6E)-farnesyl diphosphate = (-)-(E)-beta-caryophyllene + diphosphate. Its pathway is secondary metabolite biosynthesis; terpenoid biosynthesis. Catalyzes the conversion of (2E,6E)-farnesyl diphosphate (FPP) to yield the bicyclic sesquiterpene (2S,10R)-(-)-(E)-beta-caryophyllene via a probable 1,10-cyclization, which could involve the abstraction of the pyrophosphate from FPP to yield a (E,E)-germacradienyl cation. This is (-)-beta-caryophyllene synthase ((2E,6E)-farnesyl diphosphate cyclizing) (ptlA) from Saccharothrix espanaensis (strain ATCC 51144 / DSM 44229 / JCM 9112 / NBRC 15066 / NRRL 15764).